Consider the following 253-residue polypeptide: Imidazole glycerol phosphate synthase subunit HisF (253 aa).

Residues Asp11 and Asp130 contribute to the active site.

Belongs to the HisA/HisF family. As to quaternary structure, heterodimer of HisH and HisF.

The protein localises to the cytoplasm. The catalysed reaction is 5-[(5-phospho-1-deoxy-D-ribulos-1-ylimino)methylamino]-1-(5-phospho-beta-D-ribosyl)imidazole-4-carboxamide + L-glutamine = D-erythro-1-(imidazol-4-yl)glycerol 3-phosphate + 5-amino-1-(5-phospho-beta-D-ribosyl)imidazole-4-carboxamide + L-glutamate + H(+). It functions in the pathway amino-acid biosynthesis; L-histidine biosynthesis; L-histidine from 5-phospho-alpha-D-ribose 1-diphosphate: step 5/9. Functionally, IGPS catalyzes the conversion of PRFAR and glutamine to IGP, AICAR and glutamate. The HisF subunit catalyzes the cyclization activity that produces IGP and AICAR from PRFAR using the ammonia provided by the HisH subunit. The chain is Imidazole glycerol phosphate synthase subunit HisF from Dehalococcoides mccartyi (strain CBDB1).